Reading from the N-terminus, the 440-residue chain is Endoglucanase B (440 aa).

Residues 1 to 33 (MNKRLSRGKISLLASVFVTTTFMGGVNVLASTA) form the signal peptide. Glu-179 functions as the Proton donor in the catalytic mechanism. The Nucleophile role is filled by Glu-305. A Dockerin domain is found at 381 to 440 (TSYSLGDVNKDGKVNAIDYAVLKSILLGTNTNVDLSVSDMNKDGKVNALDLAVLKKMLLS).

This sequence belongs to the glycosyl hydrolase 5 (cellulase A) family.

It catalyses the reaction Endohydrolysis of (1-&gt;4)-beta-D-glucosidic linkages in cellulose, lichenin and cereal beta-D-glucans.. The enzyme catalyses Endohydrolysis of (1-&gt;4)-beta-D-xylosidic linkages in xylans.. Functionally, has endoglucanase activity on carboxymethyl-cellulose (CMC), xylan and lichenan, but not Avicel. This is Endoglucanase B (engB) from Clostridium cellulovorans (strain ATCC 35296 / DSM 3052 / OCM 3 / 743B).